We begin with the raw amino-acid sequence, 95 residues long: Large ribosomal subunit protein uL23 (95 aa).

This sequence belongs to the universal ribosomal protein uL23 family. In terms of assembly, part of the 50S ribosomal subunit. Contacts protein L29, and trigger factor when it is bound to the ribosome.

One of the early assembly proteins it binds 23S rRNA. One of the proteins that surrounds the polypeptide exit tunnel on the outside of the ribosome. Forms the main docking site for trigger factor binding to the ribosome. In Anoxybacillus flavithermus (strain DSM 21510 / WK1), this protein is Large ribosomal subunit protein uL23.